We begin with the raw amino-acid sequence, 128 residues long: Fluoride-specific ion channel FluC (128 aa).

4 helical membrane-spanning segments follow: residues 2–22 (LTFA…GAWL), 37–57 (WGTL…VALI), 65–85 (AWIR…FSTF), and 101–121 (AAAY…LGLA). Glycine 77 and threonine 80 together coordinate Na(+).

The protein belongs to the fluoride channel Fluc/FEX (TC 1.A.43) family.

Its subcellular location is the cell inner membrane. The enzyme catalyses fluoride(in) = fluoride(out). With respect to regulation, na(+) is not transported, but it plays an essential structural role and its presence is essential for fluoride channel function. In terms of biological role, fluoride-specific ion channel. Important for reducing fluoride concentration in the cell, thus reducing its toxicity. This chain is Fluoride-specific ion channel FluC, found in Bordetella bronchiseptica (strain ATCC BAA-588 / NCTC 13252 / RB50) (Alcaligenes bronchisepticus).